Consider the following 203-residue polypeptide: MNAHQANPPGESLAALLGRLGSRSIVFVGLMGAGKTAIGRKVATMLSLPFIDSDQEIESVSRMTVPELFERYGEAEFRALEQRVILRVLENGPQVLSTGGGAFMNAQTREAIAGHGVSVWLKAELDLLMDRVSKKQNRPLLKSADPRAVLERLMSERYPVYATSDVTVPTRDDRKEVIAAEVLNALCRHFGIDEIAATGEIES.

32–37 lines the ATP pocket; the sequence is GAGKTA. Thr-36 lines the Mg(2+) pocket. Asp-54, Arg-78, and Gly-100 together coordinate substrate. Arg-138 provides a ligand contact to ATP. Arg-157 serves as a coordination point for substrate.

The protein belongs to the shikimate kinase family. In terms of assembly, monomer. The cofactor is Mg(2+).

The protein resides in the cytoplasm. It carries out the reaction shikimate + ATP = 3-phosphoshikimate + ADP + H(+). The protein operates within metabolic intermediate biosynthesis; chorismate biosynthesis; chorismate from D-erythrose 4-phosphate and phosphoenolpyruvate: step 5/7. Functionally, catalyzes the specific phosphorylation of the 3-hydroxyl group of shikimic acid using ATP as a cosubstrate. The sequence is that of Shikimate kinase from Mesorhizobium japonicum (strain LMG 29417 / CECT 9101 / MAFF 303099) (Mesorhizobium loti (strain MAFF 303099)).